We begin with the raw amino-acid sequence, 260 residues long: Small ribosomal subunit protein uS2 (260 aa).

This sequence belongs to the universal ribosomal protein uS2 family.

The protein is Small ribosomal subunit protein uS2 of Mesorhizobium japonicum (strain LMG 29417 / CECT 9101 / MAFF 303099) (Mesorhizobium loti (strain MAFF 303099)).